Reading from the N-terminus, the 326-residue chain is MNIWQSTSIITWLLAPFSLLFWLVSQIRLFLFRKKILKSYRSPVPVLVVGNISVGGNGKTPVVVWLVEQLQQRGVKVGVISRGYGGKSKDFPQLVTNQSSAEMVGDEPVLIVQRTGVPLAISANRQQSIELLLNQFKLDLIVTDDGLQHYALQRDIEWVVVDGIRRFGNGFVLPAGGLRELPSRLQSVQAIICNGGKAQPNEHLMTLEPEFAVNLRTGEQKPITDFIGQECVAIAGIGHPPRFFNMLENLGVKLLKTQGFADHQAFEPAQLKALAAEQIPLLMTEKDAVKCRTFAQQNWWYVPVSAKFSPESTACLLEPILKRLGK.

An ATP-binding site is contributed by 53–60; sequence SVGGNGKT.

Belongs to the LpxK family.

It carries out the reaction a lipid A disaccharide + ATP = a lipid IVA + ADP + H(+). It functions in the pathway glycolipid biosynthesis; lipid IV(A) biosynthesis; lipid IV(A) from (3R)-3-hydroxytetradecanoyl-[acyl-carrier-protein] and UDP-N-acetyl-alpha-D-glucosamine: step 6/6. Its function is as follows. Transfers the gamma-phosphate of ATP to the 4'-position of a tetraacyldisaccharide 1-phosphate intermediate (termed DS-1-P) to form tetraacyldisaccharide 1,4'-bis-phosphate (lipid IVA). In Actinobacillus pleuropneumoniae serotype 5b (strain L20), this protein is Tetraacyldisaccharide 4'-kinase.